The chain runs to 245 residues: Putative [LysW]-aminoadipate/[LysW]-glutamate kinase (245 aa).

Arg-60 and Asn-162 together coordinate substrate.

Belongs to the acetylglutamate kinase family. LysZ subfamily.

Its subcellular location is the cytoplasm. The enzyme catalyses [amino-group carrier protein]-C-terminal-N-(1,4-dicarboxybutan-1-yl)-L-glutamine + ATP = [amino-group carrier protein]-C-terminal-N-(1-carboxy-5-phosphooxy-5-oxopentan-1-yl)-L-glutamine + ADP. The catalysed reaction is [amino-group carrier protein]-C-terminal-gamma-(L-glutamyl)-L-glutamate + ATP = [amino-group carrier protein]-C-terminal-gamma-(5-phospho-L-glutamyl)-L-glutamate + ADP. It participates in amino-acid biosynthesis; L-lysine biosynthesis via AAA pathway; L-lysine from L-alpha-aminoadipate (Thermus route): step 2/5. It functions in the pathway amino-acid biosynthesis; L-arginine biosynthesis. Functionally, involved in both the arginine and lysine biosynthetic pathways. Phosphorylates the LysW-bound precursors glutamate (for arginine biosynthesis), respectively alpha-aminoadipate (for lysine biosynthesis). In Pyrococcus abyssi (strain GE5 / Orsay), this protein is Putative [LysW]-aminoadipate/[LysW]-glutamate kinase.